Reading from the N-terminus, the 178-residue chain is Crossover junction endodeoxyribonuclease RuvC (178 aa).

Active-site residues include Asp-7, Glu-67, and Asp-139. Asp-7, Glu-67, and Asp-139 together coordinate Mg(2+).

The protein belongs to the RuvC family. Homodimer which binds Holliday junction (HJ) DNA. The HJ becomes 2-fold symmetrical on binding to RuvC with unstacked arms; it has a different conformation from HJ DNA in complex with RuvA. In the full resolvosome a probable DNA-RuvA(4)-RuvB(12)-RuvC(2) complex forms which resolves the HJ. Requires Mg(2+) as cofactor.

Its subcellular location is the cytoplasm. The enzyme catalyses Endonucleolytic cleavage at a junction such as a reciprocal single-stranded crossover between two homologous DNA duplexes (Holliday junction).. Its function is as follows. The RuvA-RuvB-RuvC complex processes Holliday junction (HJ) DNA during genetic recombination and DNA repair. Endonuclease that resolves HJ intermediates. Cleaves cruciform DNA by making single-stranded nicks across the HJ at symmetrical positions within the homologous arms, yielding a 5'-phosphate and a 3'-hydroxyl group; requires a central core of homology in the junction. The consensus cleavage sequence is 5'-(A/T)TT(C/G)-3'. Cleavage occurs on the 3'-side of the TT dinucleotide at the point of strand exchange. HJ branch migration catalyzed by RuvA-RuvB allows RuvC to scan DNA until it finds its consensus sequence, where it cleaves and resolves the cruciform DNA. The protein is Crossover junction endodeoxyribonuclease RuvC of Trichlorobacter lovleyi (strain ATCC BAA-1151 / DSM 17278 / SZ) (Geobacter lovleyi).